A 174-amino-acid chain; its full sequence is Chorismate pyruvate-lyase (174 aa).

Residues M36, R78, L116, and E157 each coordinate substrate.

The protein belongs to the UbiC family. As to quaternary structure, monomer.

Its subcellular location is the cytoplasm. The catalysed reaction is chorismate = 4-hydroxybenzoate + pyruvate. It participates in cofactor biosynthesis; ubiquinone biosynthesis. Removes the pyruvyl group from chorismate, with concomitant aromatization of the ring, to provide 4-hydroxybenzoate (4HB) for the ubiquinone pathway. This chain is Chorismate pyruvate-lyase, found in Yersinia pestis bv. Antiqua (strain Angola).